A 209-amino-acid chain; its full sequence is Uracil phosphoribosyltransferase (209 aa).

Residues Arg79, Arg104, and Asp131–Ser139 each bind 5-phospho-alpha-D-ribose 1-diphosphate. Uracil-binding positions include Ile194 and Gly199 to Ala201. 5-phospho-alpha-D-ribose 1-diphosphate is bound at residue Asp200.

Belongs to the UPRTase family. It depends on Mg(2+) as a cofactor.

The enzyme catalyses UMP + diphosphate = 5-phospho-alpha-D-ribose 1-diphosphate + uracil. It participates in pyrimidine metabolism; UMP biosynthesis via salvage pathway; UMP from uracil: step 1/1. Allosterically activated by GTP. Catalyzes the conversion of uracil and 5-phospho-alpha-D-ribose 1-diphosphate (PRPP) to UMP and diphosphate. The protein is Uracil phosphoribosyltransferase of Streptococcus pneumoniae serotype 4 (strain ATCC BAA-334 / TIGR4).